Here is a 105-residue protein sequence, read N- to C-terminus: UPF0145 protein CPS_2458 (105 aa).

The protein belongs to the UPF0145 family.

This is UPF0145 protein CPS_2458 from Colwellia psychrerythraea (strain 34H / ATCC BAA-681) (Vibrio psychroerythus).